A 230-amino-acid polypeptide reads, in one-letter code: Sperm-associated antigen 7 homolog (230 aa).

The disordered stretch occupies residues 1–45 (MADLLGSILSSMEKPPTVHDQESRRKAREQAARLKKLEEDERRKK). Residues 16–45 (PTVHDQESRRKAREQAARLKKLEEDERRKK) are compositionally biased toward basic and acidic residues. The region spanning 46–109 (AEFRKKMEKE…ESRYVMLFKK (64 aa)) is the R3H domain. A compositionally biased stretch (basic and acidic residues) spans 119–144 (EAYRKGEEWDPQKAEERRRLKEKAAL). Disordered regions lie at residues 119–169 (EAYR…KYSH) and 185–230 (ANRA…GSSV). A Phosphoserine modification is found at Ser158. The segment covering 196 to 211 (NKRDTRSIEEAMNEIR) has biased composition (basic and acidic residues).

This chain is Sperm-associated antigen 7 homolog (spag7), found in Danio rerio (Zebrafish).